The chain runs to 199 residues: N-(5'-phosphoribosyl)anthranilate isomerase (199 aa).

The protein belongs to the TrpF family.

The enzyme catalyses N-(5-phospho-beta-D-ribosyl)anthranilate = 1-(2-carboxyphenylamino)-1-deoxy-D-ribulose 5-phosphate. It functions in the pathway amino-acid biosynthesis; L-tryptophan biosynthesis; L-tryptophan from chorismate: step 3/5. In Streptococcus pneumoniae serotype 19F (strain G54), this protein is N-(5'-phosphoribosyl)anthranilate isomerase.